A 484-amino-acid chain; its full sequence is tRNA sulfurtransferase (484 aa).

The 105-residue stretch at 63-167 (QAFGERLACI…GDKLYMVTKR (105 aa)) folds into the THUMP domain. ATP contacts are provided by residues 185–186 (LI), Lys-267, Gly-289, and Gln-298. A disulfide bridge connects residues Cys-346 and Cys-458. The Rhodanese domain maps to 406–484 (IDTNEVVIDI…GYHNVKVYRP (79 aa)). Cys-458 serves as the catalytic Cysteine persulfide intermediate.

Belongs to the ThiI family.

It localises to the cytoplasm. It catalyses the reaction [ThiI sulfur-carrier protein]-S-sulfanyl-L-cysteine + a uridine in tRNA + 2 reduced [2Fe-2S]-[ferredoxin] + ATP + H(+) = [ThiI sulfur-carrier protein]-L-cysteine + a 4-thiouridine in tRNA + 2 oxidized [2Fe-2S]-[ferredoxin] + AMP + diphosphate. The enzyme catalyses [ThiS sulfur-carrier protein]-C-terminal Gly-Gly-AMP + S-sulfanyl-L-cysteinyl-[cysteine desulfurase] + AH2 = [ThiS sulfur-carrier protein]-C-terminal-Gly-aminoethanethioate + L-cysteinyl-[cysteine desulfurase] + A + AMP + 2 H(+). The protein operates within cofactor biosynthesis; thiamine diphosphate biosynthesis. Its function is as follows. Catalyzes the ATP-dependent transfer of a sulfur to tRNA to produce 4-thiouridine in position 8 of tRNAs, which functions as a near-UV photosensor. Also catalyzes the transfer of sulfur to the sulfur carrier protein ThiS, forming ThiS-thiocarboxylate. This is a step in the synthesis of thiazole, in the thiamine biosynthesis pathway. The sulfur is donated as persulfide by IscS. The polypeptide is tRNA sulfurtransferase (Shewanella sp. (strain ANA-3)).